A 254-amino-acid polypeptide reads, in one-letter code: Trypsin (254 aa).

An N-terminal signal peptide occupies residues 1 to 16 (MLRFIAVFALVNCALA). Residues 17 to 26 (GTLPNDLDGR) constitute a propeptide, activation peptide. A Peptidase S1 domain is found at 27–252 (IVNGVDTTIE…VRSWIEKTAK (226 aa)). C53 and C69 form a disulfide bridge. Catalysis depends on charge relay system residues H68 and D113. Intrachain disulfides connect C154–C158, C178–C195, and C204–C228. Residue S208 is the Charge relay system of the active site.

It belongs to the peptidase S1 family.

The protein localises to the secreted. It localises to the extracellular space. The catalysed reaction is Preferential cleavage: Arg-|-Xaa, Lys-|-Xaa.. Its function is as follows. Involved in digestion of a protein meal. This chain is Trypsin, found in Sarcophaga bullata (Grey flesh fly).